The sequence spans 302 residues: Putative glycine N-acyltransferase-like protein 1B (302 aa).

Belongs to the glycine N-acyltransferase family.

It carries out the reaction an acyl-CoA + L-glutamine = an N(2)-acyl-L-glutamine + CoA + H(+). Functionally, putative acyltransferase which transfers an acyl group to the N-terminus of glutamine. Can use phenylacetyl-CoA as an acyl donor. The chain is Putative glycine N-acyltransferase-like protein 1B from Homo sapiens (Human).